The chain runs to 1581 residues: Maestro heat-like repeat-containing protein family member 2B (1581 aa).

HEAT repeat units lie at residues 123 to 160 (FMMM…SIYK), 305 to 342 (ANPV…AEEP), 401 to 441 (MSNR…LVIG), 464 to 501 (DYLF…KLPS), 526 to 543 (AIGL…KLAE), 544 to 580 (MWKT…SLWK), 658 to 695 (ENHL…LTKT), 773 to 815 (TYKE…LKPA), 960 to 997 (CQEV…KFIP), 1017 to 1055 (PLCT…HMPV), 1112 to 1150 (KLMR…TGAH), 1153 to 1191 (HLYP…LGER), 1254 to 1291 (GVIL…EPIL), 1295 to 1332 (GNLR…GAPH), 1359 to 1379 (CESL…DINF), and 1380 to 1416 (YFKE…LTGR).

Found in a complex at least composed of MROH2B isoform 2, PRKACA isoform 2 and TCP11. Interacts with PRKACA isoform 2. Interacts with TCP11. Constitutively phosphorylated on serine and threonine residues in acrosomal region of the sperm head, midpiece and flagellar regions of noncapacitated spermatozoa. Phosphorylation on tyrosine residues increases upon sperm capacitation within the acrosomal and tail regions in a protein kinase A (PKA)-dependent signaling pathway. As to expression, expressed strongly in round spermatids and fully mature spermatozoa. Expressed weakly in pachytene spermatocytes (at protein level). Isoform 2 is specifically expressed in the testis. Isoform 2 is expressed in pachytene spermatocytes and round spermatids. Isoform 3 is weakly expressed in testis.

It is found in the cytoplasm. It localises to the cytoplasmic vesicle. The protein resides in the secretory vesicle. The protein localises to the acrosome. Its subcellular location is the cell projection. It is found in the cilium. It localises to the flagellum. Functionally, may play a role in the process of sperm capacitation. This chain is Maestro heat-like repeat-containing protein family member 2B, found in Mus musculus (Mouse).